We begin with the raw amino-acid sequence, 135 residues long: Small ribosomal subunit protein uS12 (135 aa).

Positions M1–A23 are disordered. Residue D102 is modified to 3-methylthioaspartic acid.

It belongs to the universal ribosomal protein uS12 family. In terms of assembly, part of the 30S ribosomal subunit. Contacts proteins S8 and S17. May interact with IF1 in the 30S initiation complex.

Functionally, with S4 and S5 plays an important role in translational accuracy. In terms of biological role, interacts with and stabilizes bases of the 16S rRNA that are involved in tRNA selection in the A site and with the mRNA backbone. Located at the interface of the 30S and 50S subunits, it traverses the body of the 30S subunit contacting proteins on the other side and probably holding the rRNA structure together. The combined cluster of proteins S8, S12 and S17 appears to hold together the shoulder and platform of the 30S subunit. The polypeptide is Small ribosomal subunit protein uS12 (Lactobacillus gasseri (strain ATCC 33323 / DSM 20243 / BCRC 14619 / CIP 102991 / JCM 1131 / KCTC 3163 / NCIMB 11718 / NCTC 13722 / AM63)).